The sequence spans 474 residues: Bifunctional protein GlmU (474 aa).

Residues 1–232 form a pyrophosphorylase region; it reads MSALDVIIMA…ALQVAGVNSP (232 aa). UDP-N-acetyl-alpha-D-glucosamine-binding positions include Lys-23, Gln-78, 83–84, 105–107, Gly-142, Glu-157, and Asn-230; these read GT and SGD. A Mg(2+)-binding site is contributed by Asp-107. Asn-230 contacts Mg(2+). The tract at residues 233-253 is linker; that stretch reads LQLAELERAHQLAQARALMEQ. Residues 254–474 are N-acetyltransferase; that stretch reads GVRLADPARF…WQRPAKLPKA (221 aa). UDP-N-acetyl-alpha-D-glucosamine is bound by residues Arg-349 and Lys-367. The active-site Proton acceptor is the His-379. Residues Tyr-382 and Asn-393 each contribute to the UDP-N-acetyl-alpha-D-glucosamine site. Acetyl-CoA contacts are provided by residues Ala-396, 402-403, Ser-421, Gly-439, and Arg-456; that span reads NY. The interval 454-474 is disordered; sequence VARGKQVTKENWQRPAKLPKA.

The protein in the N-terminal section; belongs to the N-acetylglucosamine-1-phosphate uridyltransferase family. In the C-terminal section; belongs to the transferase hexapeptide repeat family. In terms of assembly, homotrimer. Mg(2+) is required as a cofactor.

It is found in the cytoplasm. It carries out the reaction alpha-D-glucosamine 1-phosphate + acetyl-CoA = N-acetyl-alpha-D-glucosamine 1-phosphate + CoA + H(+). The catalysed reaction is N-acetyl-alpha-D-glucosamine 1-phosphate + UTP + H(+) = UDP-N-acetyl-alpha-D-glucosamine + diphosphate. The protein operates within nucleotide-sugar biosynthesis; UDP-N-acetyl-alpha-D-glucosamine biosynthesis; N-acetyl-alpha-D-glucosamine 1-phosphate from alpha-D-glucosamine 6-phosphate (route II): step 2/2. Its pathway is nucleotide-sugar biosynthesis; UDP-N-acetyl-alpha-D-glucosamine biosynthesis; UDP-N-acetyl-alpha-D-glucosamine from N-acetyl-alpha-D-glucosamine 1-phosphate: step 1/1. It participates in bacterial outer membrane biogenesis; LPS lipid A biosynthesis. Catalyzes the last two sequential reactions in the de novo biosynthetic pathway for UDP-N-acetylglucosamine (UDP-GlcNAc). The C-terminal domain catalyzes the transfer of acetyl group from acetyl coenzyme A to glucosamine-1-phosphate (GlcN-1-P) to produce N-acetylglucosamine-1-phosphate (GlcNAc-1-P), which is converted into UDP-GlcNAc by the transfer of uridine 5-monophosphate (from uridine 5-triphosphate), a reaction catalyzed by the N-terminal domain. The polypeptide is Bifunctional protein GlmU (Paracidovorax citrulli (strain AAC00-1) (Acidovorax citrulli)).